We begin with the raw amino-acid sequence, 296 residues long: Cytidine deaminase (296 aa).

2 CMP/dCMP-type deaminase domains span residues 52–172 and 191–296; these read TAVE…FGPK and THAD…YFAL. 93-95 is a substrate binding site; the sequence is NQE. H106 provides a ligand contact to Zn(2+). Catalysis depends on E108, which acts as the Proton donor. Zn(2+) contacts are provided by C133 and C136.

It belongs to the cytidine and deoxycytidylate deaminase family. In terms of assembly, homodimer. The cofactor is Zn(2+).

The catalysed reaction is cytidine + H2O + H(+) = uridine + NH4(+). The enzyme catalyses 2'-deoxycytidine + H2O + H(+) = 2'-deoxyuridine + NH4(+). Its function is as follows. This enzyme scavenges exogenous and endogenous cytidine and 2'-deoxycytidine for UMP synthesis. The polypeptide is Cytidine deaminase (Actinobacillus succinogenes (strain ATCC 55618 / DSM 22257 / CCUG 43843 / 130Z)).